We begin with the raw amino-acid sequence, 569 residues long: Archaeosine synthase (569 aa).

One can recognise a PUA domain in the interval 495–569; the sequence is SGGKDINYIE…ALVNIRNVKS (75 aa).

It belongs to the archaeosine synthase type 1 family. Homodimer.

It catalyses the reaction 7-cyano-7-carbaguanosine(15) in tRNA + L-glutamine + H2O = archaeosine(15) in tRNA + L-glutamate. It participates in tRNA modification; archaeosine-tRNA biosynthesis. Is responsible for the final step in the biosynthesis of archaeosine, a modified nucleoside present in the dihydrouridine loop (D-loop) of archaeal tRNA. Catalyzes the conversion of 7-cyano-7-deazaguanine (preQ0)-modified tRNA to archaeosine-tRNA, transforming a nitrile group to a formamidine group. Can use either glutamine, asparagine or ammonium as amino donor. This Methanocaldococcus jannaschii (strain ATCC 43067 / DSM 2661 / JAL-1 / JCM 10045 / NBRC 100440) (Methanococcus jannaschii) protein is Archaeosine synthase.